The following is a 37-amino-acid chain: Large ribosomal subunit protein bL36c (37 aa).

Belongs to the bacterial ribosomal protein bL36 family.

The protein localises to the plastid. It is found in the chloroplast. This Oltmannsiellopsis viridis (Marine flagellate) protein is Large ribosomal subunit protein bL36c.